Reading from the N-terminus, the 508-residue chain is Ribose import ATP-binding protein RbsA 2 (508 aa).

2 ABC transporter domains span residues 6 to 241 and 254 to 499; these read LTIH…VGRE and ERSG…SGMG. ATP is bound at residue 38–45; the sequence is GENGAGKS.

It belongs to the ABC transporter superfamily. Ribose importer (TC 3.A.1.2.1) family. In terms of assembly, the complex is composed of an ATP-binding protein (RbsA), two transmembrane proteins (RbsC) and a solute-binding protein (RbsB).

It localises to the cell inner membrane. The catalysed reaction is D-ribose(out) + ATP + H2O = D-ribose(in) + ADP + phosphate + H(+). Part of the ABC transporter complex RbsABC involved in ribose import. Responsible for energy coupling to the transport system. This is Ribose import ATP-binding protein RbsA 2 from Rhizobium etli (strain ATCC 51251 / DSM 11541 / JCM 21823 / NBRC 15573 / CFN 42).